The chain runs to 537 residues: Extracellular exo-inulinase inuE (537 aa).

Residues methionine 1 to alanine 19 form the signal peptide. Residue aspartate 41 is part of the active site. N-linked (GlcNAc...) asparagine glycans are attached at residues asparagine 49, asparagine 67, asparagine 112, asparagine 300, asparagine 363, asparagine 398, asparagine 430, and asparagine 531.

This sequence belongs to the glycosyl hydrolase 32 family.

The protein localises to the secreted. It carries out the reaction Hydrolysis of terminal, non-reducing (2-&gt;1)- and (2-&gt;6)-linked beta-D-fructofuranose residues in fructans.. Exo-inulinase involved in utilization of the plant storage polymer inulin, consisting of fructooligosaccharides with a degree of polymerization (DP) value from 2 to 60. Splits off terminal fructose units successively from the non-reducing end of the inulin molecule, and also hydrolyze sucrose and raffinose. This is Extracellular exo-inulinase inuE (inuE) from Aspergillus niger (strain ATCC MYA-4892 / CBS 513.88 / FGSC A1513).